Here is an 87-residue protein sequence, read N- to C-terminus: Keratin-associated protein 19-3 (87 aa).

Positions Gly9–Gly82 are 23 X 2 AA repeats of G-[YCGS].

Belongs to the KRTAP type 19 family. Interacts with hair keratins. In terms of tissue distribution, strong expression in narrowly defined pattern restricted to the lower and middle cortical regions of the hair shaft in both developing and cycling hair. During hair follicle regression (catagen), expression levels decrease until expression is no longer detectable in follicles at resting stage (telogen).

In the hair cortex, hair keratin intermediate filaments are embedded in an interfilamentous matrix, consisting of hair keratin-associated proteins (KRTAP), which are essential for the formation of a rigid and resistant hair shaft through their extensive disulfide bond cross-linking with abundant cysteine residues of hair keratins. The matrix proteins include the high-sulfur and high-glycine-tyrosine keratins. The chain is Keratin-associated protein 19-3 (Krtap19-3) from Mus musculus (Mouse).